The sequence spans 776 residues: K(+) efflux antiporter 3, chloroplastic (776 aa).

Residues Met-1–Phe-72 constitute a chloroplast transit peptide. At Tyr-73–Asp-93 the chain is on the lumenal, thylakoid side. A helical membrane pass occupies residues Val-94–Val-114. Position 115 (Thr-115) is a topological domain, stromal. Residues Val-116 to Ala-136 form a helical membrane-spanning segment. The Lumenal, thylakoid segment spans residues Gly-137–Lys-153. A helical membrane pass occupies residues Val-154 to Ala-174. Residues Arg-175–Lys-181 are Stromal-facing. Residues Phe-182 to Glu-202 traverse the membrane as a helical segment. Residues Leu-203–Glu-232 lie on the Lumenal, thylakoid side of the membrane. The chain crosses the membrane as a helical span at residues Ala-233–Ala-253. Residues Glu-254–Thr-266 lie on the Stromal side of the membrane. A helical membrane pass occupies residues Leu-267–Leu-287. Topologically, residues Glu-288–Ser-296 are lumenal, thylakoid. The helical transmembrane segment at Ile-297–Leu-317 threads the bilayer. Residues Gly-318 to Ala-338 are Stromal-facing. A helical membrane pass occupies residues Phe-339–Phe-359. The Lumenal, thylakoid segment spans residues Ser-360–Arg-389. The helical transmembrane segment at Gly-390–Phe-410 threads the bilayer. The Stromal segment spans residues Arg-411–Asn-415. A helical transmembrane segment spans residues Val-416–Pro-436. Residues Arg-437–Ser-445 are Lumenal, thylakoid-facing. Residues Val-446–Ala-466 form a helical membrane-spanning segment. Topologically, residues Asn-467–Arg-468 are stromal. The helical transmembrane segment at Leu-469–Ala-489 threads the bilayer. Over Leu-490–Ser-526 the chain is Lumenal, thylakoid. The RCK N-terminal domain occupies Ser-524 to Leu-649. Residues Ile-527 to Leu-547 traverse the membrane as a helical segment. Over Val-548–Asp-776 the chain is Stromal. A disordered region spans residues Met-728–Asp-776.

The protein belongs to the monovalent cation:proton antiporter 2 (CPA2) transporter (TC 2.A.37) family. KEA (TC 2.A.37.1) subfamily. In terms of tissue distribution, expressed at low levels in flowers, siliques and leaves. As to expression, expressed at low levels in flowers and leaves. Most abundant splice form in all organs, including siliques, flowers, leaves and roots. Preferentially expressed in photosynthetically active tissues, including seedling cotyledons and mature leaves. In terms of tissue distribution, expressed in shoots and roots.

It is found in the plastid. It localises to the chloroplast membrane. Its subcellular location is the golgi apparatus membrane. The protein localises to the chloroplast thylakoid membrane. The catalysed reaction is K(+)(in) + H(+)(out) = K(+)(out) + H(+)(in). With respect to regulation, regulated by a mechanism involving lumenal C-terminus region; a fine-tuned balance between photoprotective energy dissipation in high light and a maximum quantum yield in low light involves a reduced activity under high light. In terms of biological role, electroneutral K(+)/H(+) efflux antiporter assuring proton efflux from the thylakoid lumen to the plastid stroma, thus increasing the membrane potential at the expense of the proton gradient (delta pH) component of the proton motive force (PMF). Promotes photosynthesis and growth in conditions where the chloroplast (cp)ATP synthase activity is low (e.g. cgl160 mutant background) by reducing the pH gradient across the thylakoid membrane. Accelerates photosynthetic acclimation in fluctuating light environments by modulating two components of the proton motive force, the proton gradient and the electric potential (delta Psi). Promotes the relaxation of photoprotective energy-dependent non-photochemical quenching (NPQ) after transitions from high to low light, thus enhancing photosystem II (PSII) quantum efficiency in fluctuating light. On transition from high to low light, slows down photoprotection by dissipating the pH gradient across the thylakoid membrane. During photosynthetic response on transition from dark to low light, involved in a sequential mechanism of adaptation; VCCN1 and CLCe first trigger the activation of photoprotection, which is later down-regulated by KEA3 to a low steady state, while adjusting electron transport. Together with the chloroplast NADH dehydrogenase-like (NDH) complex, maximizes photosynthesis efficiency after a long dark adaptation. Required in roots for rapid hyperosmotic-induced Ca(2+) responses and for osmo-sensory potentiation in hyperosmotic conditions. Low K(+)/H(+) efflux antiporter activity. Functionally, low K(+)/H(+) efflux antiporter activity. Promotes non-photochemical quenching (NPQ) in high light conditions. The protein is K(+) efflux antiporter 3, chloroplastic of Arabidopsis thaliana (Mouse-ear cress).